A 119-amino-acid polypeptide reads, in one-letter code: DNA-binding protein inhibitor ID-3 (119 aa).

The bHLH domain maps to 28–80; sequence RGKSPAAEEPLSLLDDMNHCYSRLRELVPGVPRGTQLSQVEILQRVIDYILDL.

As to quaternary structure, homodimer, and heterodimer with other HLH proteins. Interacts with COPS5 and COPS7A. Interacts with IFI204. Interacts with GATA4 and NKX2-5. Interacts with ANKRD2; both proteins cooperate in myoblast differentiation. Interacts with CLOCK and BMAL1.

The protein resides in the nucleus. Transcriptional regulator (lacking a basic DNA binding domain) which negatively regulates the basic helix-loop-helix (bHLH) transcription factors by forming heterodimers and inhibiting their DNA binding and transcriptional activity. Implicated in regulating a variety of cellular processes, including cellular growth, senescence, differentiation, apoptosis, angiogenesis, and neoplastic transformation. Involved in myogenesis by inhibiting skeletal muscle and cardiac myocyte differentiation and promoting muscle precursor cells proliferation. Inhibits the binding of E2A-containing protein complexes to muscle creatine kinase E-box enhancer. Regulates the circadian clock by repressing the transcriptional activator activity of the CLOCK-BMAL1 heterodimer. The chain is DNA-binding protein inhibitor ID-3 (ID3) from Bos taurus (Bovine).